A 318-amino-acid chain; its full sequence is Acetyl-coenzyme A carboxylase carboxyl transferase subunit alpha (318 aa).

Residues 41–295 (RLTTKSQELT…KRQLIADLGS (255 aa)) enclose the CoA carboxyltransferase C-terminal domain.

The protein belongs to the AccA family. In terms of assembly, acetyl-CoA carboxylase is a heterohexamer composed of biotin carboxyl carrier protein (AccB), biotin carboxylase (AccC) and two subunits each of ACCase subunit alpha (AccA) and ACCase subunit beta (AccD).

It is found in the cytoplasm. It catalyses the reaction N(6)-carboxybiotinyl-L-lysyl-[protein] + acetyl-CoA = N(6)-biotinyl-L-lysyl-[protein] + malonyl-CoA. The protein operates within lipid metabolism; malonyl-CoA biosynthesis; malonyl-CoA from acetyl-CoA: step 1/1. In terms of biological role, component of the acetyl coenzyme A carboxylase (ACC) complex. First, biotin carboxylase catalyzes the carboxylation of biotin on its carrier protein (BCCP) and then the CO(2) group is transferred by the carboxyltransferase to acetyl-CoA to form malonyl-CoA. This is Acetyl-coenzyme A carboxylase carboxyl transferase subunit alpha from Idiomarina loihiensis (strain ATCC BAA-735 / DSM 15497 / L2-TR).